We begin with the raw amino-acid sequence, 307 residues long: MQETTISILGAGAWGASLANLAIANGNRVRVWSRRGSETLSAVLQGADIVLSAISMKGVREVASQIQSLTPSPETIFVTATKGLEPETIYTPSQIWQSCFPHHPVVVLSGPNLSKEIDQSLPAATVVASRVATAAATVQLAFSSSRFRVYTNPDPVGVELGGTLKNVIAIASGVCDGLHLGTNAKAALVTRGLTEMVRIGNCWGAKTETFYGLSGLGDLLATCNSPLSRNYQVGYQLAGGETLAQILAKLPGTAEGVNTCQVLVQLARQQNIVIPITEQVYRLLQGEVTPQQALDELMLRDIKPEYN.

NADPH-binding residues include W14, R34, R35, and K82. Sn-glycerol 3-phosphate-binding residues include K82 and G110. Residue S114 participates in NADPH binding. Sn-glycerol 3-phosphate contacts are provided by K165, D218, S228, R229, and N230. The Proton acceptor role is filled by K165. An NADPH-binding site is contributed by R229. E255 is an NADPH binding site.

It belongs to the NAD-dependent glycerol-3-phosphate dehydrogenase family.

It localises to the cytoplasm. It catalyses the reaction sn-glycerol 3-phosphate + NAD(+) = dihydroxyacetone phosphate + NADH + H(+). The enzyme catalyses sn-glycerol 3-phosphate + NADP(+) = dihydroxyacetone phosphate + NADPH + H(+). Its pathway is membrane lipid metabolism; glycerophospholipid metabolism. Functionally, catalyzes the reduction of the glycolytic intermediate dihydroxyacetone phosphate (DHAP) to sn-glycerol 3-phosphate (G3P), the key precursor for phospholipid synthesis. The sequence is that of Glycerol-3-phosphate dehydrogenase [NAD(P)+] from Nostoc sp. (strain PCC 7120 / SAG 25.82 / UTEX 2576).